The chain runs to 213 residues: Putative thymidylate kinase 251L (213 aa).

ATP is bound at residue 21-28; it reads GCDKTGKS.

Belongs to the thymidylate kinase family.

The enzyme catalyses dTMP + ATP = dTDP + ADP. It participates in pyrimidine metabolism; dTTP biosynthesis. Its function is as follows. Catalyzes the conversion of dTMP to dTDP. This is Putative thymidylate kinase 251L from Acheta domesticus (House cricket).